A 136-amino-acid polypeptide reads, in one-letter code: Protein scalloped (136 aa).

The protein localises to the nucleus. Functionally, probable transcription factor that function in the regulation of cell-specific gene expression during drosophila development, particularly in the differentiation of the nervous system. This Junonia coenia (Peacock butterfly) protein is Protein scalloped (SD).